Consider the following 216-residue polypeptide: Adenylate kinase (216 aa).

10–15 (GAGKGT) contributes to the ATP binding site. An NMP region spans residues 30–59 (STGDIFRKNISENTPLGIEAKSYMDNGQLV). Residues T31, R36, 57–59 (QLV), 85–88 (GFPR), and Q92 each bind AMP. An LID region spans residues 126–163 (GRRVCPSCGASYHIKFNPPTNDGKCDLCGSDVIQRKDD). R127 contacts ATP. Zn(2+) is bound by residues C130 and C133. 136 to 137 (SY) is an ATP binding site. Zn(2+) is bound by residues C150 and C153. AMP-binding residues include R160 and R171. Q199 contributes to the ATP binding site.

It belongs to the adenylate kinase family. Monomer.

It localises to the cytoplasm. It carries out the reaction AMP + ATP = 2 ADP. It participates in purine metabolism; AMP biosynthesis via salvage pathway; AMP from ADP: step 1/1. Catalyzes the reversible transfer of the terminal phosphate group between ATP and AMP. Plays an important role in cellular energy homeostasis and in adenine nucleotide metabolism. The polypeptide is Adenylate kinase (Clostridium perfringens (strain ATCC 13124 / DSM 756 / JCM 1290 / NCIMB 6125 / NCTC 8237 / Type A)).